The following is a 69-amino-acid chain: UPF0346 protein YuiB (69 aa).

Belongs to the UPF0346 family.

The chain is UPF0346 protein YuiB (yuiB) from Lactococcus lactis subsp. lactis (strain IL1403) (Streptococcus lactis).